The primary structure comprises 90 residues: Small ribosomal subunit protein bS18 (90 aa).

It belongs to the bacterial ribosomal protein bS18 family. As to quaternary structure, part of the 30S ribosomal subunit. Forms a tight heterodimer with protein bS6.

Functionally, binds as a heterodimer with protein bS6 to the central domain of the 16S rRNA, where it helps stabilize the platform of the 30S subunit. The polypeptide is Small ribosomal subunit protein bS18 (Bacteroides fragilis (strain YCH46)).